The chain runs to 193 residues: Early light-induced protein 2, chloroplastic (193 aa).

A chloroplast-targeting transit peptide spans 1 to 43 (MATASFNMQSVFAAPSGVLTTRNIRNTNQLFFKRIAPVGVRCM). The disordered stretch occupies residues 46-80 (GDPIKEDPSVPSTSTSATPPQMPQSPPPPVSKPKV). Low complexity predominate over residues 54 to 64 (SVPSTSTSATP). The span at 65-76 (PQMPQSPPPPVS) shows a compositional bias: pro residues. The next 3 membrane-spanning stretches (helical) occupy residues 102–122 (LAMVGFVAAIAMELSKGENVF), 129–149 (GVGWFLGTTALLTLASMVPLF), and 173–193 (FAMLGLVALAFTEYVTGGTLV).

This sequence belongs to the ELIP/psbS family.

The protein resides in the plastid. Its subcellular location is the chloroplast thylakoid membrane. Probably involved in the integration of pigments into the mature light-harvesting pigment-protein complexes. Light-harvesting chlorophyll (LHC) a/b-binding protein required to ensure a high rate of chlorophyll accumulation during deetiolation in continuous high light. Involved in seed germination. May fulfill a photoprotective functions. Prevents excess accumulation of free chlorophyll by inhibiting the entire chlorophyll biosynthesis pathway (e.g. 5-aminolevulinate synthesis and Mg-protoporphyrin IX chelatase activity), and hence prevent photooxidative stress. This is Early light-induced protein 2, chloroplastic from Arabidopsis thaliana (Mouse-ear cress).